The following is a 216-amino-acid chain: Pyrrolidone-carboxylate peptidase (216 aa).

Residues Glu-80, Cys-143, and His-168 contribute to the active site.

The protein belongs to the peptidase C15 family. In terms of assembly, homotetramer.

Its subcellular location is the cytoplasm. It catalyses the reaction Release of an N-terminal pyroglutamyl group from a polypeptide, the second amino acid generally not being Pro.. Removes 5-oxoproline from various penultimate amino acid residues except L-proline. The polypeptide is Pyrrolidone-carboxylate peptidase (Cupriavidus necator (strain ATCC 17699 / DSM 428 / KCTC 22496 / NCIMB 10442 / H16 / Stanier 337) (Ralstonia eutropha)).